Consider the following 500-residue polypeptide: ATP synthase subunit alpha (500 aa).

Residue 168 to 175 (GDRQTGKT) coordinates ATP.

Belongs to the ATPase alpha/beta chains family. F-type ATPases have 2 components, CF(1) - the catalytic core - and CF(0) - the membrane proton channel. CF(1) has five subunits: alpha(3), beta(3), gamma(1), delta(1), epsilon(1). CF(0) has three main subunits: a(1), b(2) and c(9-12). The alpha and beta chains form an alternating ring which encloses part of the gamma chain. CF(1) is attached to CF(0) by a central stalk formed by the gamma and epsilon chains, while a peripheral stalk is formed by the delta and b chains.

It is found in the cell membrane. The catalysed reaction is ATP + H2O + 4 H(+)(in) = ADP + phosphate + 5 H(+)(out). Produces ATP from ADP in the presence of a proton gradient across the membrane. The alpha chain is a regulatory subunit. The polypeptide is ATP synthase subunit alpha (Streptococcus suis (strain 98HAH33)).